An 886-amino-acid polypeptide reads, in one-letter code: Chitin synthase 3 (886 aa).

Disordered regions lie at residues 1-70 and 86-138; these read MQQG…YQTD and PYEP…AGGG. Positions 7 to 17 are enriched in basic and acidic residues; that stretch reads LDDRPYGRPEQ. Polar residues predominate over residues 37-56; sequence PSDQLQLNAAQSVDNLSRNS. Asn-51 carries N-linked (GlcNAc...) asparagine glycosylation. Positions 106 to 122 are enriched in basic and acidic residues; sequence YDHDDLRPMLPHQDSHA. N-linked (GlcNAc...) asparagine glycosylation is present at Asn-196. Helical transmembrane passes span 428–448, 526–546, 556–576, 602–622, 637–657, 683–703, and 712–732; these read SAFG…YVAL, RWLN…YQFF, VMLF…WFAV, ILGV…FVLS, MVYF…FIAV, TLIV…FLMF, and FVQY…YAFC. The interval 745–768 is disordered; sequence DQAEKLPSVSTKDGSGKTDLPDES. The next 2 membrane-spanning stretches (helical) occupy residues 813 to 833 and 858 to 878; these read VLAW…AAGL and VVLW…MWFL.

The protein belongs to the chitin synthase family. Class I subfamily.

It localises to the cell membrane. The enzyme catalyses [(1-&gt;4)-N-acetyl-beta-D-glucosaminyl](n) + UDP-N-acetyl-alpha-D-glucosamine = [(1-&gt;4)-N-acetyl-beta-D-glucosaminyl](n+1) + UDP + H(+). In terms of biological role, polymerizes chitin, a structural polymer of the cell wall and septum, by transferring the sugar moiety of UDP-GlcNAc to the non-reducing end of the growing chitin polymer. Involved in tolerance to hyperosmotic conditions. CHS3 is the only V.dahliae chitin synthase that is not involved in virulence. This is Chitin synthase 3 from Verticillium dahliae (strain VdLs.17 / ATCC MYA-4575 / FGSC 10137) (Verticillium wilt).